Reading from the N-terminus, the 349-residue chain is Core protein VP7 (349 aa).

Asn-287 carries an N-linked (GlcNAc...) asparagine; by host glycan.

Belongs to the orbivirus VP7 family. Homotrimer that assemble in a complex of 260 capsomers on an inner scaffold composed of VP3.

It is found in the virion. Its function is as follows. The VP7 protein is one of the five proteins (with VP1, VP3, VP4, and VP6) which form the inner capsid of the virus. In Antilocapra americana (Pronghorn), this protein is Core protein VP7 (Segment-7).